Here is an 898-residue protein sequence, read N- to C-terminus: Phosphoenolpyruvate carboxylase (898 aa).

Active-site residues include His-134 and Lys-564.

Belongs to the PEPCase type 1 family. It depends on Mg(2+) as a cofactor.

It catalyses the reaction oxaloacetate + phosphate = phosphoenolpyruvate + hydrogencarbonate. In terms of biological role, forms oxaloacetate, a four-carbon dicarboxylic acid source for the tricarboxylic acid cycle. This Chromobacterium violaceum (strain ATCC 12472 / DSM 30191 / JCM 1249 / CCUG 213 / NBRC 12614 / NCIMB 9131 / NCTC 9757 / MK) protein is Phosphoenolpyruvate carboxylase.